Here is a 285-residue protein sequence, read N- to C-terminus: RNA polymerase sigma factor RpoH (285 aa).

The sigma-70 factor domain-2 stretch occupies residues 53–122 (LILSHLRFVV…IHEYVLRNWR (70 aa)). The short motif at 77 to 80 (DLVQ) is the Interaction with polymerase core subunit RpoC element. The tract at residues 229–280 (ALASLDERSQHIVRSRWLDDDKATLQDLAEMYGVSAERIRQLEKNAMKKLKM) is sigma-70 factor domain-4. The H-T-H motif DNA-binding region spans 253 to 272 (LQDLAEMYGVSAERIRQLEK).

Belongs to the sigma-70 factor family. RpoH subfamily. In terms of assembly, interacts with the RNA polymerase core enzyme.

The protein localises to the cytoplasm. Sigma factors are initiation factors that promote the attachment of RNA polymerase to specific initiation sites and are then released. This sigma factor is involved in regulation of expression of heat shock genes. The polypeptide is RNA polymerase sigma factor RpoH (Vibrio vulnificus (strain CMCP6)).